The sequence spans 218 residues: Small ribosomal subunit protein uS3c (218 aa).

Residues 43–118 (IKDYVKKNKK…RLNIAITRIE (76 aa)) form the KH type-2 domain.

The protein belongs to the universal ribosomal protein uS3 family. In terms of assembly, part of the 30S ribosomal subunit.

It localises to the plastid. The protein localises to the chloroplast. In Phalaenopsis aphrodite subsp. formosana (Moth orchid), this protein is Small ribosomal subunit protein uS3c (rps3).